Here is a 188-residue protein sequence, read N- to C-terminus: Protein TIFY 9 (188 aa).

The tract at residues 20-41 is disordered; that stretch reads DADDRHAKSGGSSASSSSSIRG. The segment covering 28-38 has biased composition (low complexity); the sequence is SGGSSASSSSS. A Tify domain is found at 80–114; that stretch reads AAAAAAPMTLFYNGSVAVFDVSHDKAEAIMRMATE. The short motif at 135-160 is the Jas element; the sequence is PLTRTKSLQRFLSKRKERLTSLGPYQ. Residues 156 to 188 form a disordered region; sequence LGPYQVGGPAAVGATTSTTTKSFLAKEEEHTAS. Over residues 179-188 the composition is skewed to basic and acidic residues; the sequence is LAKEEEHTAS.

Belongs to the TIFY/JAZ family. Ubiquitinated. Targeted for degradation by the SCF(COI1) E3 ubiquitin ligase-proteasome pathway during jasmonate signaling.

Its function is as follows. Repressor of jasmonate responses. The sequence is that of Protein TIFY 9 from Oryza sativa subsp. indica (Rice).